Consider the following 127-residue polypeptide: Ribonuclease P protein component (127 aa).

The protein belongs to the RnpA family. As to quaternary structure, consists of a catalytic RNA component (M1 or rnpB) and a protein subunit.

The catalysed reaction is Endonucleolytic cleavage of RNA, removing 5'-extranucleotides from tRNA precursor.. Its function is as follows. RNaseP catalyzes the removal of the 5'-leader sequence from pre-tRNA to produce the mature 5'-terminus. It can also cleave other RNA substrates such as 4.5S RNA. The protein component plays an auxiliary but essential role in vivo by binding to the 5'-leader sequence and broadening the substrate specificity of the ribozyme. The polypeptide is Ribonuclease P protein component (Agrobacterium fabrum (strain C58 / ATCC 33970) (Agrobacterium tumefaciens (strain C58))).